A 273-amino-acid chain; its full sequence is Dermonecrotic toxin LsaSicTox-alphaIB1bi (273 aa).

Residue H5 is part of the active site. 2 residues coordinate Mg(2+): E25 and D27. The Nucleophile role is filled by H41. 2 cysteine pairs are disulfide-bonded: C45-C51 and C47-C190. Residue D85 participates in Mg(2+) binding.

The protein belongs to the arthropod phospholipase D family. Class II subfamily. Requires Mg(2+) as cofactor. As to expression, expressed by the venom gland.

It localises to the secreted. The enzyme catalyses an N-(acyl)-sphingosylphosphocholine = an N-(acyl)-sphingosyl-1,3-cyclic phosphate + choline. The catalysed reaction is an N-(acyl)-sphingosylphosphoethanolamine = an N-(acyl)-sphingosyl-1,3-cyclic phosphate + ethanolamine. It carries out the reaction a 1-acyl-sn-glycero-3-phosphocholine = a 1-acyl-sn-glycero-2,3-cyclic phosphate + choline. It catalyses the reaction a 1-acyl-sn-glycero-3-phosphoethanolamine = a 1-acyl-sn-glycero-2,3-cyclic phosphate + ethanolamine. Functionally, dermonecrotic toxins cleave the phosphodiester linkage between the phosphate and headgroup of certain phospholipids (sphingolipid and lysolipid substrates), forming an alcohol (often choline) and a cyclic phosphate. This toxin acts on sphingomyelin (SM). It may also act on ceramide phosphoethanolamine (CPE), lysophosphatidylcholine (LPC) and lysophosphatidylethanolamine (LPE), but not on lysophosphatidylserine (LPS), and lysophosphatidylglycerol (LPG). It acts by transphosphatidylation, releasing exclusively cyclic phosphate products as second products. Induces dermonecrosis, hemolysis, increased vascular permeability, edema, inflammatory response, and platelet aggregation. The polypeptide is Dermonecrotic toxin LsaSicTox-alphaIB1bi (Loxosceles sabina (Tucson recluse spider)).